The sequence spans 599 residues: Elongation factor 4 (599 aa).

The 183-residue stretch at asparagine 2–lysine 184 folds into the tr-type G domain. Residues aspartate 14 to threonine 19 and asparagine 131 to aspartate 134 each bind GTP.

It belongs to the TRAFAC class translation factor GTPase superfamily. Classic translation factor GTPase family. LepA subfamily.

Its subcellular location is the cell membrane. It catalyses the reaction GTP + H2O = GDP + phosphate + H(+). Its function is as follows. Required for accurate and efficient protein synthesis under certain stress conditions. May act as a fidelity factor of the translation reaction, by catalyzing a one-codon backward translocation of tRNAs on improperly translocated ribosomes. Back-translocation proceeds from a post-translocation (POST) complex to a pre-translocation (PRE) complex, thus giving elongation factor G a second chance to translocate the tRNAs correctly. Binds to ribosomes in a GTP-dependent manner. The sequence is that of Elongation factor 4 from Hamiltonella defensa subsp. Acyrthosiphon pisum (strain 5AT).